The primary structure comprises 162 residues: UPF0262 protein Acry_0160 (162 aa).

Belongs to the UPF0262 family.

The sequence is that of UPF0262 protein Acry_0160 from Acidiphilium cryptum (strain JF-5).